Reading from the N-terminus, the 323-residue chain is Pantothenate kinase (323 aa).

101-108 (GSVAVGKS) is a binding site for ATP.

Belongs to the prokaryotic pantothenate kinase family.

The protein localises to the cytoplasm. It catalyses the reaction (R)-pantothenate + ATP = (R)-4'-phosphopantothenate + ADP + H(+). It functions in the pathway cofactor biosynthesis; coenzyme A biosynthesis; CoA from (R)-pantothenate: step 1/5. This Paenarthrobacter aurescens (strain TC1) protein is Pantothenate kinase.